We begin with the raw amino-acid sequence, 361 residues long: (S)-coclaurine N-methyltransferase (361 aa).

S-adenosyl-L-methionine-binding residues include Ser101, Gly139, Asn163, Gln167, Asp189, Ile190, and Val205. Residue Cys336 is part of the active site.

This sequence belongs to the CFA/CMAS family. As to quaternary structure, homodimer. As to expression, highly expressed in rhizomes. Detected in roots, petioles, flower buds and leaves. Expressed between the developing stele and ground tissues near the root apical meristem, in the immature endodermis, the pericycle and the spokes of developing xylem in the apical region of the root and in the protoderm of leaf primordia in rhizomes.

The protein localises to the cytoplasm. It catalyses the reaction norreticuline + S-adenosyl-L-methionine = reticuline + S-adenosyl-L-homocysteine + H(+). The catalysed reaction is (S)-coclaurine + S-adenosyl-L-methionine = (S)-N-methylcoclaurine + S-adenosyl-L-homocysteine + H(+). The enzyme catalyses heliamine + S-adenosyl-L-methionine = N-methylheliamine + S-adenosyl-L-homocysteine + H(+). Its pathway is alkaloid biosynthesis. Involved in the biosynthesis of protoberberine alkaloids. N-methyltransferase with a substrate preference for (R,S)-norreticuline but also active with dimethoxytetrahydroisoquinoline. In Thalictrum flavum subsp. glaucum (Yellow meadow rue), this protein is (S)-coclaurine N-methyltransferase.